We begin with the raw amino-acid sequence, 355 residues long: UDP-N-acetylglucosamine--N-acetylmuramyl-(pentapeptide) pyrophosphoryl-undecaprenol N-acetylglucosamine transferase (355 aa).

UDP-N-acetyl-alpha-D-glucosamine is bound by residues threonine 15–glycine 17, asparagine 127, arginine 163, serine 191, isoleucine 244, alanine 263–glutamate 268, and glutamine 288.

The protein belongs to the glycosyltransferase 28 family. MurG subfamily.

It localises to the cell inner membrane. It catalyses the reaction di-trans,octa-cis-undecaprenyl diphospho-N-acetyl-alpha-D-muramoyl-L-alanyl-D-glutamyl-meso-2,6-diaminopimeloyl-D-alanyl-D-alanine + UDP-N-acetyl-alpha-D-glucosamine = di-trans,octa-cis-undecaprenyl diphospho-[N-acetyl-alpha-D-glucosaminyl-(1-&gt;4)]-N-acetyl-alpha-D-muramoyl-L-alanyl-D-glutamyl-meso-2,6-diaminopimeloyl-D-alanyl-D-alanine + UDP + H(+). It participates in cell wall biogenesis; peptidoglycan biosynthesis. Cell wall formation. Catalyzes the transfer of a GlcNAc subunit on undecaprenyl-pyrophosphoryl-MurNAc-pentapeptide (lipid intermediate I) to form undecaprenyl-pyrophosphoryl-MurNAc-(pentapeptide)GlcNAc (lipid intermediate II). The protein is UDP-N-acetylglucosamine--N-acetylmuramyl-(pentapeptide) pyrophosphoryl-undecaprenol N-acetylglucosamine transferase of Sodalis glossinidius (strain morsitans).